We begin with the raw amino-acid sequence, 124 residues long: Cytochrome c oxidase subunit 4 isoform 1, mitochondrial (124 aa).

Lys4 is modified (N6-acetyllysine; alternate). Lys4 is subject to N6-succinyllysine; alternate. Residues Ser31 and Ser33 each carry the phosphoserine modification. Position 35 is an N6-acetyllysine; alternate (Lys35). The residue at position 35 (Lys35) is an N6-succinyllysine; alternate. The residue at position 42 (Lys42) is an N6-acetyllysine.

It belongs to the cytochrome c oxidase IV family. Component of the cytochrome c oxidase (complex IV, CIV), a multisubunit enzyme composed of 14 subunits. The complex is composed of a catalytic core of 3 subunits MT-CO1, MT-CO2 and MT-CO3, encoded in the mitochondrial DNA, and 11 supernumerary subunits COX4I, COX5A, COX5B, COX6A, COX6B, COX6C, COX7A, COX7B, COX7C, COX8 and NDUFA4, which are encoded in the nuclear genome. The complex exists as a monomer or a dimer and forms supercomplexes (SCs) in the inner mitochondrial membrane with NADH-ubiquinone oxidoreductase (complex I, CI) and ubiquinol-cytochrome c oxidoreductase (cytochrome b-c1 complex, complex III, CIII), resulting in different assemblies (supercomplex SCI(1)III(2)IV(1) and megacomplex MCI(2)III(2)IV(2)). Interacts with PHB2; the interaction decreases in absence of SPHK2. Interacts with AFG1L. Interacts with ABCB7; this interaction allows the regulation of cellular iron homeostasis and cellular reactive oxygen species (ROS) levels in cardiomyocytes. Interacts with FLVCR2; this interaction occurs in the absence of heme and is disrupted upon heme binding. Interacts with IRGC.

Its subcellular location is the mitochondrion inner membrane. It participates in energy metabolism; oxidative phosphorylation. Functionally, component of the cytochrome c oxidase, the last enzyme in the mitochondrial electron transport chain which drives oxidative phosphorylation. The respiratory chain contains 3 multisubunit complexes succinate dehydrogenase (complex II, CII), ubiquinol-cytochrome c oxidoreductase (cytochrome b-c1 complex, complex III, CIII) and cytochrome c oxidase (complex IV, CIV), that cooperate to transfer electrons derived from NADH and succinate to molecular oxygen, creating an electrochemical gradient over the inner membrane that drives transmembrane transport and the ATP synthase. Cytochrome c oxidase is the component of the respiratory chain that catalyzes the reduction of oxygen to water. Electrons originating from reduced cytochrome c in the intermembrane space (IMS) are transferred via the dinuclear copper A center (CU(A)) of subunit 2 and heme A of subunit 1 to the active site in subunit 1, a binuclear center (BNC) formed by heme A3 and copper B (CU(B)). The BNC reduces molecular oxygen to 2 water molecules using 4 electrons from cytochrome c in the IMS and 4 protons from the mitochondrial matrix. The sequence is that of Cytochrome c oxidase subunit 4 isoform 1, mitochondrial (COX4I1) from Saimiri sciureus (Common squirrel monkey).